We begin with the raw amino-acid sequence, 148 residues long: Deoxyuridine 5'-triphosphate nucleotidohydrolase (148 aa).

Residues 67-69, N80, 84-86, and M94 each bind substrate; these read RSG and LID.

This sequence belongs to the dUTPase family. The cofactor is Mg(2+).

It catalyses the reaction dUTP + H2O = dUMP + diphosphate + H(+). It functions in the pathway pyrimidine metabolism; dUMP biosynthesis; dUMP from dCTP (dUTP route): step 2/2. Its function is as follows. This enzyme is involved in nucleotide metabolism: it produces dUMP, the immediate precursor of thymidine nucleotides and it decreases the intracellular concentration of dUTP so that uracil cannot be incorporated into DNA. The sequence is that of Deoxyuridine 5'-triphosphate nucleotidohydrolase from Burkholderia cenocepacia (strain HI2424).